The following is a 33-amino-acid chain: Protamine-M6/M7 (33 aa).

The disordered stretch occupies residues 1–33 (PRRRRETSRPIRRRRRARRAPIRRRRRVVRRRR).

Testis.

The protein resides in the nucleus. It is found in the chromosome. Functionally, protamines substitute for histones in the chromatin of sperm during the haploid phase of spermatogenesis. They compact sperm DNA into a highly condensed, stable and inactive complex. The protein is Protamine-M6/M7 of Mugil cephalus (Flathead mullet).